Here is a 484-residue protein sequence, read N- to C-terminus: MFIRRLHKFSYNPQYKLKCGLEIHTQLKTKYKLFSLSPTSYNEPANTKLSYFDVGLPGTQPKLNPEALLLALRASVAFNSEIQPYSSFDRKHYFYPDQPLGYQITQHYYPLAKNGYLELNKYDNIKDKRIRLEQIQLEQDTGKTVNYDDRINVDYNRANTPLIEVVTKPDFENIEQVQAFVRKYQLIVSHLDICTGELETGAMRVDANISVNGNPRVEIKNLGSSGEIVDALQFEYMRQVRLLQNGQGINQETRGWTGEGTESLRSKENAVDYRYVPDSELPAIRLDQQITKQLQKSLPELPDTILERLINKPYNLDLAHAKNLLYQPEVLKYYETIFASISSNANKWFFQELLAAFAKRGVEFDVDIVPPSMLVDIVKKVETEEISLAAARIILKYIVENKSTNTLVELVEILDLKKPEANDELQLAVKEICQQIIKNNPEVVTKIANGHKNALQVLIGQAMKATKGKVHAKDFKEQFIELLK.

Belongs to the GatB/GatE family. GatB subfamily. Subunit of the heterotrimeric GatFAB amidotransferase (AdT) complex, composed of A, B and F subunits.

Its subcellular location is the mitochondrion. The enzyme catalyses L-glutamyl-tRNA(Gln) + L-glutamine + ATP + H2O = L-glutaminyl-tRNA(Gln) + L-glutamate + ADP + phosphate + H(+). In terms of biological role, allows the formation of correctly charged Gln-tRNA(Gln) through the transamidation of misacylated Glu-tRNA(Gln) in the mitochondria. The reaction takes place in the presence of glutamine and ATP through an activated gamma-phospho-Glu-tRNA(Gln). In Candida tropicalis (strain ATCC MYA-3404 / T1) (Yeast), this protein is Glutamyl-tRNA(Gln) amidotransferase subunit B, mitochondrial.